The following is a 161-amino-acid chain: Lipoprotein signal peptidase (161 aa).

A run of 2 helical transmembrane segments spans residues 64 to 84 (YRVPFFIITTSVAVVFLAWFY) and 92 to 114 (VLGRCAVSLVLGGAIGNLIDRVR). Active-site residues include D120 and D138. A helical transmembrane segment spans residues 131–151 (WPAFNVADSAICVGVGMLLLA).

This sequence belongs to the peptidase A8 family.

The protein localises to the cell inner membrane. It catalyses the reaction Release of signal peptides from bacterial membrane prolipoproteins. Hydrolyzes -Xaa-Yaa-Zaa-|-(S,diacylglyceryl)Cys-, in which Xaa is hydrophobic (preferably Leu), and Yaa (Ala or Ser) and Zaa (Gly or Ala) have small, neutral side chains.. It functions in the pathway protein modification; lipoprotein biosynthesis (signal peptide cleavage). This protein specifically catalyzes the removal of signal peptides from prolipoproteins. This chain is Lipoprotein signal peptidase, found in Syntrophotalea carbinolica (strain DSM 2380 / NBRC 103641 / GraBd1) (Pelobacter carbinolicus).